The following is a 971-amino-acid chain: Breast cancer type 2 susceptibility protein homolog (971 aa).

The span at 1–15 (MDQNGASGSHPNRLS) shows a compositional bias: polar residues. 4 disordered regions span residues 1–30 (MDQN…ATVS), 130–155 (SRKR…LSVQ), 349–395 (KLKL…DQPN), and 420–466 (MQCS…SSHQ). Over residues 130–139 (SRKRDPKSHK) the composition is skewed to basic residues. The span at 349–364 (KLKLEPSSQKEQKSSK) shows a compositional bias: basic and acidic residues. Composition is skewed to polar residues over residues 375–392 (SKQS…TILD), 420–432 (MQCS…SKNA), and 453–466 (KQTP…SSHQ). 3 BRCA2 repeats span residues 570–604 (AEPE…EFQS), 671–705 (NESQ…QSKA), and 746–780 (SETE…EFQA). Residues 916-971 (MERFAPKPSSTSTPLADRDLNRSKDCTKNRQDAEDMSPICMQPKKSRRLGLSRSRY) are disordered. Basic and acidic residues predominate over residues 931-948 (ADRDLNRSKDCTKNRQDA). The span at 959 to 971 (KKSRRLGLSRSRY) shows a compositional bias: basic residues.

Interacts with Rad9. Interacts with spn-A/Rad51. Interacts with cyclin CycG.

The protein localises to the nucleus. In terms of biological role, involved in and required for double-strand break repair by meiotic and mitotic homologous recombination. During meiosis, has a dual role in the repair of meiotic double-stranded breaks and the efficient activation of the meiotic recombination checkpoint. This Drosophila melanogaster (Fruit fly) protein is Breast cancer type 2 susceptibility protein homolog.